Reading from the N-terminus, the 338-residue chain is Peptidyl-prolyl cis-trans isomerase cyp11 (338 aa).

In terms of domain architecture, PPIase cyclophilin-type spans 7-172; it reads FFDIDVDGNR…HNVMIANCGE (166 aa). Residues 186–338 form a disordered region; the sequence is ASAVSDESED…RGRFKYRPTY (153 aa). Positions 208–218 are enriched in acidic residues; sequence DDSSSDEDSEE. Basic residues predominate over residues 223–242; the sequence is RTKKKRSRKHSKKDKKKKKR. The span at 243–309 shows a compositional bias: basic and acidic residues; that stretch reads ESSNRKRSPE…PEKRSSERRV (67 aa). Basic residues predominate over residues 329-338; that stretch reads RGRFKYRPTY.

It belongs to the cyclophilin-type PPIase family.

It catalyses the reaction [protein]-peptidylproline (omega=180) = [protein]-peptidylproline (omega=0). PPIases accelerate the folding of proteins. It catalyzes the cis-trans isomerization of proline imidic peptide bonds in oligopeptides. This Rhizopus delemar (strain RA 99-880 / ATCC MYA-4621 / FGSC 9543 / NRRL 43880) (Mucormycosis agent) protein is Peptidyl-prolyl cis-trans isomerase cyp11 (cyp11).